We begin with the raw amino-acid sequence, 303 residues long: Oxygen-dependent coproporphyrinogen-III oxidase (303 aa).

Residue serine 93 coordinates substrate. Residues histidine 97 and histidine 107 each coordinate a divalent metal cation. Residue histidine 107 is the Proton donor of the active site. 109 to 111 (NVR) serves as a coordination point for substrate. Positions 146 and 176 each coordinate a divalent metal cation. Residues 241–276 (YVEFNLVYDRGTLFGLQSGGRTESILMSLPPQVRWG) are important for dimerization. 259 to 261 (GGR) is a binding site for substrate.

It belongs to the aerobic coproporphyrinogen-III oxidase family. In terms of assembly, homodimer. A divalent metal cation is required as a cofactor.

Its subcellular location is the cytoplasm. It catalyses the reaction coproporphyrinogen III + O2 + 2 H(+) = protoporphyrinogen IX + 2 CO2 + 2 H2O. Its pathway is porphyrin-containing compound metabolism; protoporphyrin-IX biosynthesis; protoporphyrinogen-IX from coproporphyrinogen-III (O2 route): step 1/1. In terms of biological role, involved in the heme biosynthesis. Catalyzes the aerobic oxidative decarboxylation of propionate groups of rings A and B of coproporphyrinogen-III to yield the vinyl groups in protoporphyrinogen-IX. This Pseudomonas putida (strain GB-1) protein is Oxygen-dependent coproporphyrinogen-III oxidase.